The primary structure comprises 436 residues: Glutamyl-tRNA reductase (436 aa).

Residues 49–52, S109, 114–116, and Q120 contribute to the substrate site; these read TCNR and EPQ. The active-site Nucleophile is C50. 189-194 lines the NADP(+) pocket; the sequence is GAGEMC.

It belongs to the glutamyl-tRNA reductase family. In terms of assembly, homodimer.

It catalyses the reaction (S)-4-amino-5-oxopentanoate + tRNA(Glu) + NADP(+) = L-glutamyl-tRNA(Glu) + NADPH + H(+). It functions in the pathway porphyrin-containing compound metabolism; protoporphyrin-IX biosynthesis; 5-aminolevulinate from L-glutamyl-tRNA(Glu): step 1/2. Its function is as follows. Catalyzes the NADPH-dependent reduction of glutamyl-tRNA(Glu) to glutamate 1-semialdehyde (GSA). The polypeptide is Glutamyl-tRNA reductase (Pelobacter propionicus (strain DSM 2379 / NBRC 103807 / OttBd1)).